A 356-amino-acid chain; its full sequence is DNA polymerase IV (356 aa).

Residues 6–187 (IIHIDMDAFY…QPIRRLHGVG (182 aa)) form the UmuC domain. Mg(2+)-binding residues include D10 and D105. Residue E106 is part of the active site.

Belongs to the DNA polymerase type-Y family. As to quaternary structure, monomer. It depends on Mg(2+) as a cofactor.

The protein localises to the cytoplasm. It carries out the reaction DNA(n) + a 2'-deoxyribonucleoside 5'-triphosphate = DNA(n+1) + diphosphate. Its function is as follows. Poorly processive, error-prone DNA polymerase involved in untargeted mutagenesis. Copies undamaged DNA at stalled replication forks, which arise in vivo from mismatched or misaligned primer ends. These misaligned primers can be extended by PolIV. Exhibits no 3'-5' exonuclease (proofreading) activity. May be involved in translesional synthesis, in conjunction with the beta clamp from PolIII. This chain is DNA polymerase IV, found in Halorhodospira halophila (strain DSM 244 / SL1) (Ectothiorhodospira halophila (strain DSM 244 / SL1)).